The sequence spans 68 residues: Small ribosomal subunit protein bS21 (68 aa).

This sequence belongs to the bacterial ribosomal protein bS21 family.

The protein is Small ribosomal subunit protein bS21 of Dinoroseobacter shibae (strain DSM 16493 / NCIMB 14021 / DFL 12).